We begin with the raw amino-acid sequence, 551 residues long: Glucose-6-phosphate isomerase (551 aa).

The active-site Proton donor is the Glu-349. Active-site residues include His-378 and Lys-480.

This sequence belongs to the GPI family.

The protein resides in the cytoplasm. The catalysed reaction is alpha-D-glucose 6-phosphate = beta-D-fructose 6-phosphate. The protein operates within carbohydrate biosynthesis; gluconeogenesis. It participates in carbohydrate degradation; glycolysis; D-glyceraldehyde 3-phosphate and glycerone phosphate from D-glucose: step 2/4. Catalyzes the reversible isomerization of glucose-6-phosphate to fructose-6-phosphate. The polypeptide is Glucose-6-phosphate isomerase (Prochlorococcus marinus (strain MIT 9313)).